We begin with the raw amino-acid sequence, 189 residues long: Probable hydrogen peroxide-inducible genes activator (189 aa).

The HTH lysR-type domain maps to 8 to 65 (PTLAGLRAFAAVAEKQHFGSAASALGVNQSTLSQALAGLESGLGVRLIERSTRRVFLT). The segment at residues 25–44 (FGSAASALGVNQSTLSQALA) is a DNA-binding region (H-T-H motif).

Belongs to the LysR transcriptional regulatory family.

Required for the induction the katG gene for catalase. Involved in the response to hydrogen peroxide. This Mycobacterium xenopi protein is Probable hydrogen peroxide-inducible genes activator (oxyR).